Reading from the N-terminus, the 515-residue chain is MTKRALISVSDKRGIVDLARELKHLGWDIISTGGTRLALEEAGVVTVAIDDVTGFPEMMDGRVKTLHPLIHGGLLARRDIEHHLQAAKQNRIELIDLVVVNLYPFKETICRPDVTYDVAVDMVDIGGPSLLRSAAKNHASVTVVVDPTDYPLVLGELASTGSTSYQTRQSLAAKAFRHTAAYDAVIADYFTRQAGETKPEKLTLTYDLKQSMRYGENPQQAADFYQRALPTTYSIASAKQLNGKELSFNNIRDADAAIRIIRDFKERPTVVALKHMNPCGIGQADDIETAWDFAYAADPVSIFGGIVVLNREVDLATAEKLHAIFLELIIAPGYSKEALAVLTHKKKHLRILELPFAAQEASEIEAEYTGVLGGLLVQNQDVVTESPADWIVVTKRQPNEQEMAALAFAWKTIKYVKSNAIVIANDHMTLGVGPGQTNRIASIRIAIAQATGQLEGAVLASDAFFPFADSIEEIAAAGIKAIIQPGGSIRDSESIAAANQHGITMIFTGVRHFRH.

Positions 1–145 (MTKRALISVS…KNHASVTVVV (145 aa)) constitute an MGS-like domain.

Belongs to the PurH family.

It carries out the reaction (6R)-10-formyltetrahydrofolate + 5-amino-1-(5-phospho-beta-D-ribosyl)imidazole-4-carboxamide = 5-formamido-1-(5-phospho-D-ribosyl)imidazole-4-carboxamide + (6S)-5,6,7,8-tetrahydrofolate. The catalysed reaction is IMP + H2O = 5-formamido-1-(5-phospho-D-ribosyl)imidazole-4-carboxamide. It functions in the pathway purine metabolism; IMP biosynthesis via de novo pathway; 5-formamido-1-(5-phospho-D-ribosyl)imidazole-4-carboxamide from 5-amino-1-(5-phospho-D-ribosyl)imidazole-4-carboxamide (10-formyl THF route): step 1/1. The protein operates within purine metabolism; IMP biosynthesis via de novo pathway; IMP from 5-formamido-1-(5-phospho-D-ribosyl)imidazole-4-carboxamide: step 1/1. This chain is Bifunctional purine biosynthesis protein PurH, found in Streptococcus equi subsp. equi (strain 4047).